Consider the following 101-residue polypeptide: MIPGELFIEDGEIELNAGRKTVTLTVSNTGDRPIQVGSHYHFFETNPALKFDRDKARGMRLDIAAGTAVRFEPGQSRDVQLVELAGKRTIYGFRGDVMGKL.

It belongs to the urease beta subunit family. Heterotrimer of UreA (gamma), UreB (beta) and UreC (alpha) subunits. Three heterotrimers associate to form the active enzyme.

It localises to the cytoplasm. It catalyses the reaction urea + 2 H2O + H(+) = hydrogencarbonate + 2 NH4(+). It functions in the pathway nitrogen metabolism; urea degradation; CO(2) and NH(3) from urea (urease route): step 1/1. This Rhodopseudomonas palustris (strain ATCC BAA-98 / CGA009) protein is Urease subunit beta.